Consider the following 274-residue polypeptide: Thiamine kinase (274 aa).

This sequence belongs to the thiamine kinase family.

The enzyme catalyses thiamine + ATP = thiamine phosphate + ADP + H(+). It participates in cofactor biosynthesis; thiamine diphosphate biosynthesis; thiamine phosphate from thiamine: step 1/1. Catalyzes the ATP-dependent phosphorylation of thiamine to thiamine phosphate. Is involved in thiamine salvage. In Escherichia coli O81 (strain ED1a), this protein is Thiamine kinase.